Consider the following 887-residue polypeptide: Endoglucanase 1 (887 aa).

Residues 1 to 55 (MRLVNSLGRRKILLILAVIVAFSTVLLFAKLWGRKTSSTLDEVGSKTHGDLTAEN) form the signal peptide. The segment at 40–66 (LDEVGSKTHGDLTAENKNGGYLPEEEI) is disordered. Residues 43 to 53 (VGSKTHGDLTA) are compositionally biased toward basic and acidic residues. The catalytic stretch occupies residues 56–518 (KNGGYLPEEE…AKMYKLYGGS (463 aa)). Residue D131 is the Nucleophile of the active site. A disordered region spans residues 441-460 (ENPPKRPHHRTAHGSWADSQ). Residues H448, D486, and E495 contribute to the active site. Residues 529–684 (VPEDEIFVEA…GVLVFGREPG (156 aa)) enclose the CBM3 1 domain. Positions 684–730 (GSASKSTSKDNGLSKATPTVKTESQPTAKHTQNPASDFKTPANQNSV) are disordered. Over residues 686–729 (ASKSTSKDNGLSKATPTVKTESQPTAKHTQNPASDFKTPANQNS) the composition is skewed to polar residues. A CBM3 2 domain is found at 736–887 (IKGEVVLQYA…SNKLVYGKEP (152 aa)).

The protein belongs to the glycosyl hydrolase 9 (cellulase E) family.

It carries out the reaction Endohydrolysis of (1-&gt;4)-beta-D-glucosidic linkages in cellulose, lichenin and cereal beta-D-glucans.. Its pathway is glycan metabolism; cellulose degradation. Its function is as follows. This enzyme catalyzes the endohydrolysis of 1,4-beta-glucosidic linkages in cellulose, lichenin and cereal beta-D-glucans. Principally active against barley beta-glucan. The protein is Endoglucanase 1 (celI) of Acetivibrio thermocellus (strain ATCC 27405 / DSM 1237 / JCM 9322 / NBRC 103400 / NCIMB 10682 / NRRL B-4536 / VPI 7372) (Clostridium thermocellum).